We begin with the raw amino-acid sequence, 626 residues long: Glycosyltransferase 25 family member (626 aa).

Positions 1 to 21 are cleaved as a signal peptide; sequence MLKKQVFYGILLICAFVCIYG. N113, N234, N272, and N533 each carry an N-linked (GlcNAc...) asparagine glycan. The Prevents secretion from ER motif lies at 623-626; it reads HQEL.

Belongs to the glycosyltransferase 25 family.

It localises to the endoplasmic reticulum lumen. In Drosophila pseudoobscura pseudoobscura (Fruit fly), this protein is Glycosyltransferase 25 family member.